The sequence spans 188 residues: uncharacterized protein (188 aa).

Over residues 1–15 (MVSSKDKIKEELKQE) the composition is skewed to basic and acidic residues. The disordered stretch occupies residues 1-21 (MVSSKDKIKEELKQEEPEENV).

This is an uncharacterized protein from Saccharolobus islandicus (Sulfolobus islandicus).